We begin with the raw amino-acid sequence, 126 residues long: S-adenosylmethionine decarboxylase proenzyme (126 aa).

Residue Ser63 is the Schiff-base intermediate with substrate; via pyruvic acid of the active site. Pyruvic acid (Ser); by autocatalysis is present on Ser63. His68 (proton acceptor; for processing activity) is an active-site residue. Cys83 functions as the Proton donor; for catalytic activity in the catalytic mechanism.

Belongs to the prokaryotic AdoMetDC family. Type 1 subfamily. Heterotetramer of two alpha and two beta chains arranged as a dimer of alpha/beta heterodimers. Pyruvate serves as cofactor. In terms of processing, is synthesized initially as an inactive proenzyme. Formation of the active enzyme involves a self-maturation process in which the active site pyruvoyl group is generated from an internal serine residue via an autocatalytic post-translational modification. Two non-identical subunits are generated from the proenzyme in this reaction, and the pyruvate is formed at the N-terminus of the alpha chain, which is derived from the carboxyl end of the proenzyme. The post-translation cleavage follows an unusual pathway, termed non-hydrolytic serinolysis, in which the side chain hydroxyl group of the serine supplies its oxygen atom to form the C-terminus of the beta chain, while the remainder of the serine residue undergoes an oxidative deamination to produce ammonia and the pyruvoyl group blocking the N-terminus of the alpha chain.

It carries out the reaction S-adenosyl-L-methionine + H(+) = S-adenosyl 3-(methylsulfanyl)propylamine + CO2. The protein operates within amine and polyamine biosynthesis; S-adenosylmethioninamine biosynthesis; S-adenosylmethioninamine from S-adenosyl-L-methionine: step 1/1. In terms of biological role, catalyzes the decarboxylation of S-adenosylmethionine to S-adenosylmethioninamine (dcAdoMet), the propylamine donor required for the synthesis of the polyamines spermine and spermidine from the diamine putrescine. The sequence is that of S-adenosylmethionine decarboxylase proenzyme from Bacillus velezensis (strain DSM 23117 / BGSC 10A6 / LMG 26770 / FZB42) (Bacillus amyloliquefaciens subsp. plantarum).